The following is a 185-amino-acid chain: MQKTNPGLQRLFQIPTFTLSNSDLTCEMKVKIADTARYSLKQNPNQDKAEVIERCRIAVYAEFFVADWLSGYVNKGQEDVDDPYTYAWDVLAHPKYCGLRVEVKTHQTDSRWISVTTGCSGEYPYGSGINLGPILNHQVADCIIIFNTKEIHPGVIQYTPKFIGDREDLRKVVRKSNYNGWYLSI.

The catalysed reaction is Endonucleolytic cleavage of the 5' phosphodiester bond of deoxycytidine in single-stranded DNA.. Cleaves single-stranded DNA in a dC-specific manner. The cleavage occurs exclusively at the 5'-proximal position (dC1) within a dCs tract having a minimal size of 6 bases. These specific cleavages may have a detrimental effect on the replication of host dC-containing DNA. The protein is Endonuclease IV (denB) of Enterobacteria phage T4 (Bacteriophage T4).